Reading from the N-terminus, the 142-residue chain is Large-conductance mechanosensitive channel (142 aa).

A run of 3 helical transmembrane segments spans residues 14 to 34, 38 to 58, and 82 to 102; these read VVDLAVGVIIGAAFGAIVNSL, VIMPIIGAITGGLDFSNYYIP, and GQFLTLAVNFTIIAFVLFMVI.

Belongs to the MscL family. In terms of assembly, homopentamer.

It localises to the cell inner membrane. Its function is as follows. Channel that opens in response to stretch forces in the membrane lipid bilayer. May participate in the regulation of osmotic pressure changes within the cell. The protein is Large-conductance mechanosensitive channel of Methylorubrum populi (strain ATCC BAA-705 / NCIMB 13946 / BJ001) (Methylobacterium populi).